The following is a 274-amino-acid chain: Large ribosomal subunit protein uL2 (274 aa).

The segment at 225–274 (MNPVDHPHGGGEGRSPIGRHPVTPWGKPTLGVKTRKKNKASSKLIIKRRK) is disordered. Residues 257 to 274 (KTRKKNKASSKLIIKRRK) are compositionally biased toward basic residues.

The protein belongs to the universal ribosomal protein uL2 family. In terms of assembly, part of the 50S ribosomal subunit. Forms a bridge to the 30S subunit in the 70S ribosome.

In terms of biological role, one of the primary rRNA binding proteins. Required for association of the 30S and 50S subunits to form the 70S ribosome, for tRNA binding and peptide bond formation. It has been suggested to have peptidyltransferase activity; this is somewhat controversial. Makes several contacts with the 16S rRNA in the 70S ribosome. The chain is Large ribosomal subunit protein uL2 from Carboxydothermus hydrogenoformans (strain ATCC BAA-161 / DSM 6008 / Z-2901).